Consider the following 92-residue polypeptide: C-C motif chemokine 4 (92 aa).

Positions 1 to 23 (MKLCVSALSLLLLVAAFCAPGFS) are cleaved as a signal peptide. Cystine bridges form between Cys34–Cys58 and Cys35–Cys74.

This sequence belongs to the intercrine beta (chemokine CC) family. Homodimer.

The protein resides in the secreted. Monokine with inflammatory and chemokinetic properties. This Mus musculus (Mouse) protein is C-C motif chemokine 4 (Ccl4).